We begin with the raw amino-acid sequence, 357 residues long: Prostaglandin D2 receptor (357 aa).

Over 1–20 (MNESYRCQTSTWVERGSSAT) the chain is Extracellular. The N-linked (GlcNAc...) asparagine glycan is linked to N2. Residues 21 to 41 (MGAVLFGAGLLGNLLALVLLA) form a helical membrane-spanning segment. At 42 to 58 (RSGLGSCRPGPLHPPPS) the chain is on the cytoplasmic side. The chain crosses the membrane as a helical span at residues 59 to 79 (VFYVLVCGLTVTDLLGKCLIS). Residues 80–106 (PMVLAAYAQNQSLKELLPASGNQLCET) lie on the Extracellular side of the membrane. N89 is a glycosylation site (N-linked (GlcNAc...) asparagine). C104 and C182 are oxidised to a cystine. The helical transmembrane segment at 107–127 (FAFLMSFFGLASTLQLLAMAV) threads the bilayer. Topologically, residues 128–149 (ECWLSLGHPFFYQRHVTLRRGV) are cytoplasmic. Residues 150-170 (LVAPVVAAFCLAFCALPFAGF) form a helical membrane-spanning segment. The Extracellular portion of the chain corresponds to 171–194 (GKFVQYCPGTWCFIQMIHKERSFS). A helical transmembrane segment spans residues 195-215 (VIGFSVLYSSLMALLVLATVV). At 216 to 261 (CNLGAMYNLYDMHRRQRHYPHRCSRDRAQSGSDYRHGSLHPLEELD) the chain is on the cytoplasmic side. A helical membrane pass occupies residues 262–282 (HFVLLALMTVLFTMCSLPLIY). Over 283–306 (RAYYGAFKLENKAEGDSEDLQALR) the chain is Extracellular. The helical transmembrane segment at 307–327 (FLSVISIVDPWIFIIFRTSVF) threads the bilayer. Over 328 to 357 (RMLFHKVFTRPLIYRNWSSHSQQSNVESTL) the chain is Cytoplasmic.

Belongs to the G-protein coupled receptor 1 family. As to expression, most abundantly expressed in the ileum, followed by lung, stomach and uterus.

Its subcellular location is the cell membrane. Its function is as follows. Receptor for prostaglandin D2 (PGD2). The activity of this receptor is mainly mediated by G(s) proteins that stimulate adenylate cyclase, resulting in an elevation of intracellular cAMP. A mobilization of calcium is also observed, but without formation of inositol 1,4,5-trisphosphate. Involved in PLA2G3-dependent maturation of mast cells. PLA2G3 is secreted by immature mast cells and acts on nearby fibroblasts upstream to PTDGS to synthesize PGD2, which in turn promotes mast cell maturation and degranulation via PTGDR. This chain is Prostaglandin D2 receptor (Ptgdr), found in Mus musculus (Mouse).